A 115-amino-acid chain; its full sequence is Phosphoribosyl-ATP pyrophosphatase (115 aa).

The protein belongs to the PRA-PH family.

It localises to the cytoplasm. It catalyses the reaction 1-(5-phospho-beta-D-ribosyl)-ATP + H2O = 1-(5-phospho-beta-D-ribosyl)-5'-AMP + diphosphate + H(+). The protein operates within amino-acid biosynthesis; L-histidine biosynthesis; L-histidine from 5-phospho-alpha-D-ribose 1-diphosphate: step 2/9. This Bordetella parapertussis (strain 12822 / ATCC BAA-587 / NCTC 13253) protein is Phosphoribosyl-ATP pyrophosphatase.